A 493-amino-acid polypeptide reads, in one-letter code: Glutamyl-tRNA(Gln) amidotransferase subunit A (493 aa).

Catalysis depends on charge relay system residues Lys81 and Ser156. The Acyl-ester intermediate role is filled by Ser180.

It belongs to the amidase family. GatA subfamily. As to quaternary structure, heterotrimer of A, B and C subunits.

It carries out the reaction L-glutamyl-tRNA(Gln) + L-glutamine + ATP + H2O = L-glutaminyl-tRNA(Gln) + L-glutamate + ADP + phosphate + H(+). Its function is as follows. Allows the formation of correctly charged Gln-tRNA(Gln) through the transamidation of misacylated Glu-tRNA(Gln) in organisms which lack glutaminyl-tRNA synthetase. The reaction takes place in the presence of glutamine and ATP through an activated gamma-phospho-Glu-tRNA(Gln). The polypeptide is Glutamyl-tRNA(Gln) amidotransferase subunit A (Mycobacterium ulcerans (strain Agy99)).